The chain runs to 333 residues: L-lactate dehydrogenase (333 aa).

NAD(+)-binding positions include Gly-29–Lys-57 and Arg-99. Arg-106, Asn-138, and Arg-169 together coordinate substrate. Asn-138 contacts NAD(+). His-193 acts as the Proton acceptor in catalysis. Thr-249 serves as a coordination point for substrate.

The protein belongs to the LDH/MDH superfamily. LDH family. Homotetramer.

It localises to the cytoplasm. It carries out the reaction (S)-lactate + NAD(+) = pyruvate + NADH + H(+). The protein operates within fermentation; pyruvate fermentation to lactate; (S)-lactate from pyruvate: step 1/1. The chain is L-lactate dehydrogenase (ldh-1) from Caenorhabditis elegans.